We begin with the raw amino-acid sequence, 127 residues long: Fatty acid binding protein 1-A, liver (127 aa).

The protein belongs to the calycin superfamily. Fatty-acid binding protein (FABP) family. In terms of tissue distribution, in adults, weakly expressed in the intestine.

The protein localises to the cytoplasm. Its function is as follows. Binds free fatty acids and their coenzyme A derivatives, bilirubin, and some other small molecules in the cytoplasm. May be involved in intracellular lipid transport. The protein is Fatty acid binding protein 1-A, liver of Danio rerio (Zebrafish).